We begin with the raw amino-acid sequence, 533 residues long: Capsid protein VP1 (533 aa).

The tract at residues 333-353 (TIDLQQNPVPQTSSSTTDSPQ) is disordered.

It belongs to the microviridae F protein family.

The protein localises to the virion. It is found in the host cytoplasm. In terms of biological role, assembles to form an icosahedral capsid with a T=1 symmetry. The chain is Capsid protein VP1 from Bdellovibrio bacteriovorus (Bacteriophage phiMH2K).